The chain runs to 257 residues: Hydroxyacylglutathione hydrolase (257 aa).

Zn(2+) is bound by residues His58, His60, Asp62, His63, His116, Asp135, and His173.

Belongs to the metallo-beta-lactamase superfamily. Glyoxalase II family. In terms of assembly, monomer. Requires Zn(2+) as cofactor.

It catalyses the reaction an S-(2-hydroxyacyl)glutathione + H2O = a 2-hydroxy carboxylate + glutathione + H(+). Its pathway is secondary metabolite metabolism; methylglyoxal degradation; (R)-lactate from methylglyoxal: step 2/2. Its function is as follows. Thiolesterase that catalyzes the hydrolysis of S-D-lactoyl-glutathione to form glutathione and D-lactic acid. The protein is Hydroxyacylglutathione hydrolase of Brucella melitensis biotype 1 (strain ATCC 23456 / CCUG 17765 / NCTC 10094 / 16M).